The sequence spans 868 residues: Thiol protease/hemagglutinin PrtT (868 aa).

Positions 1–27 (MKRIFYTLGLLLLCLPMLQAGPVTRSK) are cleaved as a signal peptide. Catalysis depends on residues C184 and H327.

It belongs to the peptidase C10 family.

Appears to be specific for arginine-containing peptide bonds. Possesses hemagglutinin activity. The protein is Thiol protease/hemagglutinin PrtT (prtT) of Porphyromonas gingivalis (Bacteroides gingivalis).